The chain runs to 216 residues: Putative cat eye syndrome critical region protein 9 (216 aa).

An N-terminal signal peptide occupies residues 1–23; sequence MQSHLAPLACAAAAGRAGGSCQA. An N-linked (GlcNAc...) asparagine glycan is attached at Asn-148.

As to expression, ubiquitously expressed with higher expression in heart.

It is found in the secreted. This Homo sapiens (Human) protein is Putative cat eye syndrome critical region protein 9 (CECR9).